A 211-amino-acid polypeptide reads, in one-letter code: Holliday junction branch migration complex subunit RuvA (211 aa).

Positions Met1–Ala64 are domain I. The domain II stretch occupies residues Asn65–Val143. The flexible linker stretch occupies residues Ser144–Thr162. The interval Phe163 to Ile211 is domain III.

It belongs to the RuvA family. In terms of assembly, homotetramer. Forms an RuvA(8)-RuvB(12)-Holliday junction (HJ) complex. HJ DNA is sandwiched between 2 RuvA tetramers; dsDNA enters through RuvA and exits via RuvB. An RuvB hexamer assembles on each DNA strand where it exits the tetramer. Each RuvB hexamer is contacted by two RuvA subunits (via domain III) on 2 adjacent RuvB subunits; this complex drives branch migration. In the full resolvosome a probable DNA-RuvA(4)-RuvB(12)-RuvC(2) complex forms which resolves the HJ.

The protein localises to the cytoplasm. In terms of biological role, the RuvA-RuvB-RuvC complex processes Holliday junction (HJ) DNA during genetic recombination and DNA repair, while the RuvA-RuvB complex plays an important role in the rescue of blocked DNA replication forks via replication fork reversal (RFR). RuvA specifically binds to HJ cruciform DNA, conferring on it an open structure. The RuvB hexamer acts as an ATP-dependent pump, pulling dsDNA into and through the RuvAB complex. HJ branch migration allows RuvC to scan DNA until it finds its consensus sequence, where it cleaves and resolves the cruciform DNA. This chain is Holliday junction branch migration complex subunit RuvA, found in Colwellia psychrerythraea (strain 34H / ATCC BAA-681) (Vibrio psychroerythus).